The chain runs to 265 residues: Anaphase-promoting complex subunit 9 (265 aa).

As to quaternary structure, the APC/C is composed of at least 13 subunits that stay tightly associated throughout the cell cycle: APC1, APC2, APC4, APC5, APC9, APC11, CDC16, CDC23, CDC26, CDC27, DOC1, MND2 and SWM1.

The protein localises to the cytoplasm. It is found in the nucleus. It functions in the pathway protein modification; protein ubiquitination. Its function is as follows. Component of the anaphase promoting complex/cyclosome (APC/C), a cell cycle-regulated E3 ubiquitin-protein ligase complex that controls progression through mitosis and the G1 phase of the cell cycle. The APC/C is thought to confer substrate specificity and, in the presence of ubiquitin-conjugating E2 enzymes, it catalyzes the formation of protein-ubiquitin conjugates that are subsequently degraded by the 26S proteasome. In early mitosis, the APC/C is activated by CDC20 and targets securin PDS1, the B-type cyclin CLB5, and other anaphase inhibitory proteins for proteolysis, thereby triggering the separation of sister chromatids at the metaphase-to-anaphase transition. In late mitosis and in G1, degradation of CLB5 allows activation of the APC/C by CDH1, which is needed to destroy CDC20 and the B-type cyclin CLB2 to allow exit from mitosis and creating the low CDK state necessary for cytokinesis and for reforming prereplicative complexes in G1 prior to another round of replication. This Saccharomyces cerevisiae (strain ATCC 204508 / S288c) (Baker's yeast) protein is Anaphase-promoting complex subunit 9 (APC9).